A 308-amino-acid polypeptide reads, in one-letter code: Ribosomal RNA large subunit methyltransferase F (308 aa).

It belongs to the methyltransferase superfamily. METTL16/RlmF family.

Its subcellular location is the cytoplasm. The enzyme catalyses adenosine(1618) in 23S rRNA + S-adenosyl-L-methionine = N(6)-methyladenosine(1618) in 23S rRNA + S-adenosyl-L-homocysteine + H(+). Functionally, specifically methylates the adenine in position 1618 of 23S rRNA. In Shigella flexneri serotype 5b (strain 8401), this protein is Ribosomal RNA large subunit methyltransferase F.